The chain runs to 439 residues: Hemagglutinin-esterase (439 aa).

The N-terminal stretch at 1–22 (MGRMCIAMAPRTLLLLIGCQLV) is a signal peptide. Residues 12–132 (TLLLLIGCQL…DNNKWMGNKA (121 aa)) are esterase domain 1. The Virion surface portion of the chain corresponds to 23-407 (FGFNEPINIV…PVCLYDPLPV (385 aa)). Residue Ser45 is the Nucleophile of the active site. A disulfide bridge connects residues Cys49 and Cys70. Residue Asn94 is glycosylated (N-linked (GlcNAc...) asparagine; by host). Cys118 and Cys167 are disulfide-bonded. The segment at 133–281 (RFYALLYKKM…GNYKAVSLEY (149 aa)) is receptor binding. N-linked (GlcNAc...) asparagine; by host glycosylation is found at Asn196, Asn246, Asn309, and Asn316. 2 disulfides stabilise this stretch: Cys202-Cys291 and Cys210-Cys264. Residues 282-395 (LLTIPSKAIC…HCPTAANIGY (114 aa)) form an esterase domain 2 region. Residues Cys322 and Cys327 are joined by a disulfide bond. Asn331 is a glycosylation site (N-linked (GlcNAc...) asparagine; by host). Active-site charge relay system residues include Asp342 and His345. Asn360 and Asn374 each carry an N-linked (GlcNAc...) asparagine; by host glycan. An intrachain disulfide couples Cys363 to Cys387. Residues 408 to 428 (ILLGVLLGIAVLIIVFLILYF) form a helical membrane-spanning segment. Topologically, residues 429 to 439 (MADSSVRLHEA) are intravirion.

This sequence belongs to the influenza type C/coronaviruses hemagglutinin-esterase family. As to quaternary structure, homodimer; disulfide-linked. Forms a complex with the M protein in the pre-Golgi. Associates then with S-M complex to form a ternary complex S-M-HE. N-glycosylated in the host RER.

The protein resides in the virion membrane. It is found in the host cell membrane. It catalyses the reaction N-acetyl-9-O-acetylneuraminate + H2O = N-acetylneuraminate + acetate + H(+). It carries out the reaction N-acetyl-4-O-acetylneuraminate + H2O = N-acetylneuraminate + acetate + H(+). Functionally, structural protein that makes short spikes at the surface of the virus. Contains receptor binding and receptor-destroying activities. Mediates de-O-acetylation of N-acetyl-4-O-acetylneuraminic acid, which is probably the receptor determinant recognized by the virus on the surface of erythrocytes and susceptible cells. This receptor-destroying activity is important for virus release as it probably helps preventing self-aggregation and ensures the efficient spread of the progeny virus from cell to cell. May serve as a secondary viral attachment protein for initiating infection, the spike protein being the major one. May become a target for both the humoral and the cellular branches of the immune system. This chain is Hemagglutinin-esterase, found in Rat coronavirus (strain 681) (RCV-SDAV).